The sequence spans 398 residues: Yellow-related salivary protein SP04 (398 aa).

Residues 1–18 (MKWFLFLLSTIFVQGILG) form the signal peptide. Residues 73–94 (TLTEIERKKHPERSPPLSKFSG) form a disordered region. The span at 75 to 85 (TEIERKKHPER) shows a compositional bias: basic and acidic residues.

Belongs to the major royal jelly protein family. Female salivary gland (at protein level).

It is found in the secreted. Its function is as follows. Probably modulates blood feeding of sand flies on vertebrate species by binding and sequestering different mediators involved in the host response. Binds biogenic amines. Binds serotonin with high affinity. Binds histamine with low affinity. The chain is Yellow-related salivary protein SP04 from Phlebotomus argentipes (Phlebotomine sand fly).